The primary structure comprises 748 residues: Cysteine--tRNA ligase, cytoplasmic (748 aa).

The tract at residues 1-25 (MAGSSGQQGKGRRVQPQWSPPAGTQ) is disordered. A2 bears the N-acetylalanine mark. At S19 the chain carries Phosphoserine. C55 contacts Zn(2+). Position 56 (G56) interacts with L-cysteine. The 'HIGH' region motif lies at 57–67 (PTVYDASHMGH). T96 contacts L-cysteine. Positions 101 to 104 (KIIK) match the 'KIIK' region motif. Phosphoserine is present on residues S305 and S307. Residues C348, H373, and E377 each contribute to the Zn(2+) site. H373 is a binding site for L-cysteine. The short motif at 406 to 410 (KMSKS) is the 'KMSKS' region element. K409 is a binding site for ATP. Basic and acidic residues-rich tracts occupy residues 654-679 (KRQVEEEKRKKKEEAARRKQEQEAAK) and 700-717 (KFDENGLPTHDAEGKELS). Disordered regions lie at residues 654–686 (KRQVEEEKRKKKEEAARRKQEQEAAKLAKMKIP) and 700–721 (KFDENGLPTHDAEGKELSKGQA). S746 bears the Phosphoserine mark.

As to quaternary structure, homodimer. Zn(2+) is required as a cofactor.

Its subcellular location is the cytoplasm. It catalyses the reaction tRNA(Cys) + L-cysteine + ATP = L-cysteinyl-tRNA(Cys) + AMP + diphosphate. Catalyzes the ATP-dependent ligation of cysteine to tRNA(Cys). The sequence is that of Cysteine--tRNA ligase, cytoplasmic (CARS1) from Macaca fascicularis (Crab-eating macaque).